A 1396-amino-acid chain; its full sequence is DNA-directed RNA polymerase subunit beta (1396 aa).

This sequence belongs to the RNA polymerase beta chain family. In terms of assembly, the RNAP catalytic core consists of 2 alpha, 1 beta, 1 beta' and 1 omega subunit. When a sigma factor is associated with the core the holoenzyme is formed, which can initiate transcription.

It carries out the reaction RNA(n) + a ribonucleoside 5'-triphosphate = RNA(n+1) + diphosphate. DNA-dependent RNA polymerase catalyzes the transcription of DNA into RNA using the four ribonucleoside triphosphates as substrates. This is DNA-directed RNA polymerase subunit beta from Erythrobacter litoralis (strain HTCC2594).